A 143-amino-acid chain; its full sequence is NADH-quinone oxidoreductase subunit A (143 aa).

The next 3 membrane-spanning stretches (helical) occupy residues 8–28 (FGNV…GYLT), 63–83 (FYVV…LYPW), and 90–110 (LGVF…LGLV).

Belongs to the complex I subunit 3 family. NDH-1 is composed of 14 different subunits. Subunits NuoA, H, J, K, L, M, N constitute the membrane sector of the complex.

It is found in the cell inner membrane. The enzyme catalyses a quinone + NADH + 5 H(+)(in) = a quinol + NAD(+) + 4 H(+)(out). Functionally, NDH-1 shuttles electrons from NADH, via FMN and iron-sulfur (Fe-S) centers, to quinones in the respiratory chain. The immediate electron acceptor for the enzyme in this species is believed to be a menaquinone. Couples the redox reaction to proton translocation (for every two electrons transferred, four hydrogen ions are translocated across the cytoplasmic membrane), and thus conserves the redox energy in a proton gradient. This Chlorobium phaeobacteroides (strain DSM 266 / SMG 266 / 2430) protein is NADH-quinone oxidoreductase subunit A.